Reading from the N-terminus, the 311-residue chain is Ribonuclease Z (311 aa).

7 residues coordinate Zn(2+): histidine 61, histidine 63, aspartate 65, histidine 66, histidine 137, aspartate 207, and histidine 263. Aspartate 65 serves as the catalytic Proton acceptor.

This sequence belongs to the RNase Z family. Homodimer. Zn(2+) serves as cofactor.

It catalyses the reaction Endonucleolytic cleavage of RNA, removing extra 3' nucleotides from tRNA precursor, generating 3' termini of tRNAs. A 3'-hydroxy group is left at the tRNA terminus and a 5'-phosphoryl group is left at the trailer molecule.. In terms of biological role, zinc phosphodiesterase, which displays some tRNA 3'-processing endonuclease activity. Probably involved in tRNA maturation, by removing a 3'-trailer from precursor tRNA. In Thermococcus onnurineus (strain NA1), this protein is Ribonuclease Z.